The primary structure comprises 155 residues: DNA polymerase epsilon subunit 4 (155 aa).

Composition is skewed to acidic residues over residues 1 to 16 (MASE…EEQD) and 24 to 48 (ETEE…DNPE). A disordered region spans residues 1–76 (MASEELFEAE…APADNEAKMT (76 aa)). Polar residues predominate over residues 49 to 65 (AESTTEQLTEKPVTNGN).

Component of the DNA polymerase epsilon complex consisting of four subunits: the catalytic subunit PolE1/DNApol-epsilon255 and the accessory subunits PolE2/DNApol-epsilon58, Chrac-14/DNApolE3 and PolE4/Mes4.

The protein localises to the nucleus. Functionally, accessory component of the DNA polymerase epsilon complex. Participates in DNA repair and in chromosomal DNA replication. Has a role in cell cycle progression. Required for wing morphogenesis. The polypeptide is DNA polymerase epsilon subunit 4 (Drosophila melanogaster (Fruit fly)).